We begin with the raw amino-acid sequence, 86 residues long: Small ribosomal subunit protein bS16 (86 aa).

It belongs to the bacterial ribosomal protein bS16 family.

In Borreliella burgdorferi (strain ATCC 35210 / DSM 4680 / CIP 102532 / B31) (Borrelia burgdorferi), this protein is Small ribosomal subunit protein bS16.